We begin with the raw amino-acid sequence, 740 residues long: E3 ubiquitin-protein ligase TRIM9 (740 aa).

The RING-type; degenerate zinc-finger motif lies at Cys7–Cys30. Residues Gly64 to Ala73 are compositionally biased toward gly residues. The segment at Gly64–Asp114 is disordered. A compositionally biased stretch (low complexity) spans Ala74–Ser105. The B box-type 1; atypical zinc finger occupies Arg195–Pro244. Residues Cys200, Cys203, Cys225, His230, Cys255, His258, Cys277, and His283 each coordinate Zn(2+). The segment at Gln250–Ile291 adopts a B box-type 2 zinc-finger fold. Positions Thr294–Lys324 form a coiled coil. Residues Leu399–Ile459 form the COS domain. The Fibronectin type-III domain occupies Ala474 to Val567. The region spanning Asn549–Lys736 is the B30.2/SPRY domain.

The protein belongs to the TRIM/RBCC family. Interacts (via fibronectin type-III domain) with pico. Interacts (via SPRY domain) with netrin receptor fra.

Its subcellular location is the cell projection. It is found in the axon. It localises to the perikaryon. The enzyme catalyses S-ubiquitinyl-[E2 ubiquitin-conjugating enzyme]-L-cysteine + [acceptor protein]-L-lysine = [E2 ubiquitin-conjugating enzyme]-L-cysteine + N(6)-ubiquitinyl-[acceptor protein]-L-lysine.. It participates in protein modification; protein ubiquitination. E3 ubiquitin-protein ligase activity. During embryonic and larval development, regulates the pattern of axonal projections of class IV nociceptive sensory neurons (C4da) downstream of netrin receptor fra. Regulates fine-scale topography of C4da axon terminals upon neuronal activity. During eye development, consolidates the attachment of R8 photoreceptor growth cones to the target medulla layer, probably downstream of fra. In Drosophila melanogaster (Fruit fly), this protein is E3 ubiquitin-protein ligase TRIM9.